A 241-amino-acid chain; its full sequence is Phosphoribosylaminoimidazole-succinocarboxamide synthase (241 aa).

Belongs to the SAICAR synthetase family.

It catalyses the reaction 5-amino-1-(5-phospho-D-ribosyl)imidazole-4-carboxylate + L-aspartate + ATP = (2S)-2-[5-amino-1-(5-phospho-beta-D-ribosyl)imidazole-4-carboxamido]succinate + ADP + phosphate + 2 H(+). It participates in purine metabolism; IMP biosynthesis via de novo pathway; 5-amino-1-(5-phospho-D-ribosyl)imidazole-4-carboxamide from 5-amino-1-(5-phospho-D-ribosyl)imidazole-4-carboxylate: step 1/2. This chain is Phosphoribosylaminoimidazole-succinocarboxamide synthase, found in Deinococcus geothermalis (strain DSM 11300 / CIP 105573 / AG-3a).